The sequence spans 135 residues: DNA-directed RNA polymerase subunit omega (135 aa).

Belongs to the RNA polymerase subunit omega family. As to quaternary structure, the RNAP catalytic core consists of 2 alpha, 1 beta, 1 beta' and 1 omega subunit. When a sigma factor is associated with the core the holoenzyme is formed, which can initiate transcription.

It catalyses the reaction RNA(n) + a ribonucleoside 5'-triphosphate = RNA(n+1) + diphosphate. Promotes RNA polymerase assembly. Latches the N- and C-terminal regions of the beta' subunit thereby facilitating its interaction with the beta and alpha subunits. This Sinorhizobium medicae (strain WSM419) (Ensifer medicae) protein is DNA-directed RNA polymerase subunit omega.